A 112-amino-acid polypeptide reads, in one-letter code: uncharacterized protein (112 aa).

The protein to Buchnera BU585.

This is an uncharacterized protein from Buchnera aphidicola subsp. Schizaphis graminum (strain Sg).